Here is a 387-residue protein sequence, read N- to C-terminus: MTVTLNLSRPNSALPGKKRLTGLSVPALKAEMEALGLEPKAANMRARQIRRWIHHFGTTDFAAMTDIAKDLRAQLAEKFEVERPEIADHQVSRDGTQKWLTRYGPGIEGESVYIPDVGKAGALCVSSQVGCTLNCTFCHTGTQALVRNLTAAEIVQQVIIARDALSEWPSSIEERRLTNIVFMGMGEPLYNLDNVAEAIDTISDGDGMAIGRRRITVSTAGVAPKIPELGERTGAMLAISLHATNNDLRNELVPLNRKYDIQTLFDAIRAYPGLGNAKRVTFEYVMLKGINDTLAEARDLVKLMKGVPSKINLIPFNPWPGSPYECSDWETIEEFAEVLNRAGYASPIRTPRGRDILAACGQLRSESVKVRASELRKQQASAEGAES.

The active-site Proton acceptor is E110. One can recognise a Radical SAM core domain in the interval 117-349 (VGKAGALCVS…NRAGYASPIR (233 aa)). C124 and C360 are disulfide-bonded. [4Fe-4S] cluster contacts are provided by C131, C135, and C138. Residues 186–187 (GE), S218, 240–242 (SLH), and N317 contribute to the S-adenosyl-L-methionine site. C360 functions as the S-methylcysteine intermediate in the catalytic mechanism.

This sequence belongs to the radical SAM superfamily. RlmN family. [4Fe-4S] cluster is required as a cofactor.

It is found in the cytoplasm. The enzyme catalyses adenosine(2503) in 23S rRNA + 2 reduced [2Fe-2S]-[ferredoxin] + 2 S-adenosyl-L-methionine = 2-methyladenosine(2503) in 23S rRNA + 5'-deoxyadenosine + L-methionine + 2 oxidized [2Fe-2S]-[ferredoxin] + S-adenosyl-L-homocysteine. The catalysed reaction is adenosine(37) in tRNA + 2 reduced [2Fe-2S]-[ferredoxin] + 2 S-adenosyl-L-methionine = 2-methyladenosine(37) in tRNA + 5'-deoxyadenosine + L-methionine + 2 oxidized [2Fe-2S]-[ferredoxin] + S-adenosyl-L-homocysteine. In terms of biological role, specifically methylates position 2 of adenine 2503 in 23S rRNA and position 2 of adenine 37 in tRNAs. m2A2503 modification seems to play a crucial role in the proofreading step occurring at the peptidyl transferase center and thus would serve to optimize ribosomal fidelity. The polypeptide is Dual-specificity RNA methyltransferase RlmN (Hyphomonas neptunium (strain ATCC 15444)).